A 351-amino-acid polypeptide reads, in one-letter code: Protein RecA (351 aa).

ATP is bound at residue 73-80; the sequence is GPESSGKT.

This sequence belongs to the RecA family.

The protein resides in the cytoplasm. Can catalyze the hydrolysis of ATP in the presence of single-stranded DNA, the ATP-dependent uptake of single-stranded DNA by duplex DNA, and the ATP-dependent hybridization of homologous single-stranded DNAs. It interacts with LexA causing its activation and leading to its autocatalytic cleavage. This Oleidesulfovibrio alaskensis (strain ATCC BAA-1058 / DSM 17464 / G20) (Desulfovibrio alaskensis) protein is Protein RecA.